Consider the following 229-residue polypeptide: Adapter protein MecA (229 aa).

Belongs to the MecA family. Homodimer.

In terms of biological role, enables the recognition and targeting of unfolded and aggregated proteins to the ClpC protease or to other proteins involved in proteolysis. This is Adapter protein MecA from Latilactobacillus sakei subsp. sakei (strain 23K) (Lactobacillus sakei subsp. sakei).